The chain runs to 611 residues: Podocan (611 aa).

A signal peptide spans 1–23; the sequence is MAGSRGLPLLLLVLQLFLGPVLP. An LRRNT domain is found at 60–97; the sequence is PEPGPATVDCPRDCACSQEGVVDCGGIDLREFPGDLPE. 5 LRR repeats span residues 98 to 119, 122 to 145, 148 to 169, 170 to 190, and 193 to 213; these read HTNH…ELSR, RLET…AFEH, SLNY…LPNA, LISV…TFGQ, and NLRS…PDHM. The N-linked (GlcNAc...) asparagine glycan is linked to N215. LRR repeat units lie at residues 219–239, 240–261, 264–284, 290–311, 312–332, 335–358, 361–382, 383–403, 406–427, 432–453, 477–490, 503–523, 524–545, 548–569, and 574–583; these read NVEI…HLPP, ALYK…AFSE, NLRE…DNET, SLEY…LPRS, LVLL…VLTP, NLEY…AFQG, KLHT…LPRR, VRTL…DFAT, FLEE…RDAF, LLRS…LPKN, QLRE…RLRS, GLQL…GLPP, SLEY…AFDS, NLKG…ESAF, and HLQVLDIEGN. N282 carries an N-linked (GlcNAc...) asparagine glycan. The N-linked (GlcNAc...) asparagine glycan is linked to N411. Residues 585-611 are disordered; it reads EFGNGSKDKDEEEEEEEEEEDEEEETR. Residues 594–611 are compositionally biased toward acidic residues; sequence DEEEEEEEEEEDEEEETR.

Belongs to the small leucine-rich proteoglycan (SLRP) family. SLRP class V subfamily. Binds to type I collagen. N-glycosylated. As to expression, kidney. Expressed in podocytes and likely vascular endothelial cells within the glomerulus.

It is found in the secreted. The protein localises to the extracellular space. Its subcellular location is the extracellular matrix. Its function is as follows. Negatively regulates cell proliferation and cell migration, especially in smooth muscle cells. The chain is Podocan (Podn) from Mus musculus (Mouse).